The following is a 707-amino-acid chain: Heat shock protein hsp88 (707 aa).

Residues 662-692 (EAEKAAKKAEEEARKAKEAAEKAAQEGAKDD) are compositionally biased toward basic and acidic residues. Residues 662–707 (EAEKAAKKAEEEARKAKEAAEKAAQEGAKDDEMTDADAPKPVVEEA) form a disordered region.

The protein belongs to the heat shock protein 70 family. As to quaternary structure, binds hsp30 independent of temperature or substrate. Post-translationally, the N-terminus is blocked.

Its subcellular location is the cytoplasm. This is Heat shock protein hsp88 (hsp88) from Neurospora crassa (strain ATCC 24698 / 74-OR23-1A / CBS 708.71 / DSM 1257 / FGSC 987).